Here is a 516-residue protein sequence, read N- to C-terminus: Cytochrome P450 monooxygenase asR2 (516 aa).

Residues 9–29 form a helical membrane-spanning segment; sequence LNSITFSLLVFLGFVGVSQLI. N-linked (GlcNAc...) asparagine glycans are attached at residues Asn-248 and Asn-273. Cys-461 contacts heme.

The protein belongs to the cytochrome P450 family. The cofactor is heme.

It is found in the membrane. The protein operates within secondary metabolite biosynthesis; terpenoid biosynthesis. Its function is as follows. Cytochrome P450 monooxygenase; part of the gene cluster that mediates the biosynthesis of xenovulene A, an unusual meroterpenoid that has potent inhibitory effects on the human gamma-aminobutyrate A (GABAA) benzodiazepine receptor. The first step of xenovulene A biosynthesis is the biosynthesis of 3-methylorcinaldehyde performed by the non-reducing polyketide synthase aspks1. The salicylate hydroxylase asL1 then catalyzes the oxidative dearomatization of 3-methylorcinaldehyde to yield a dearomatized hydroxycyclohexadione. The 2-oxoglutarate-dependent dioxygenase asL3 further catalyzes the oxidative ring expansion to provide the first tropolone metabolite. The cytochrome P450 monooxygenase asR2 allows the synthesis of tropolone hemiacetal. In parallel, a previously unrecognised class of terpene cyclase, asR6, produces alpha-humulene from farnesylpyrophosphate (FPP). The putative Diels-Alderase asR5 probably catalyzes the formation of the tropolone-humulene skeleton by linking humulene and the polyketide moiety. Oxidative-ring contractions catalyzed by asL4 and asL6 then processively remove carbon atoms from the polyketide to yield xenovulene A. The chain is Cytochrome P450 monooxygenase asR2 from Sarocladium schorii (Acremonium strictum (strain IMI 501407)).